A 652-amino-acid polypeptide reads, in one-letter code: Inactive leucine-rich repeat receptor-like serine/threonine-protein kinase At1g60630 (652 aa).

Positions 1 to 23 are cleaved as a signal peptide; that stretch reads MISSSSCMFFLVFAFFLISPVRS. Residues 24 to 256 are Extracellular-facing; it reads SDVEALLSLK…SRTKLIGIIS (233 aa). LRR repeat units lie at residues 64–84, 85–108, 109–132, 134–156, 158–178, and 179–203; these read SKLV…SLNQ, LDQL…LSGL, VNLK…LTSL, RLKT…LLRL, RLYT…PLNQ, and ATLR…ALNR. 3 N-linked (GlcNAc...) asparagine glycosylation sites follow: Asn-72, Asn-104, and Asn-120. N-linked (GlcNAc...) asparagine glycans are attached at residues Asn-185, Asn-205, and Asn-225. A helical transmembrane segment spans residues 257-277; that stretch reads GSICGGILILLLTFLLICLLW. Residues 278-652 are Cytoplasmic-facing; the sequence is RRKRSKSKRE…SLPREDHMSI (375 aa). Residues 286–321 are disordered; it reads REERRSKRVAESKEAKTAETEEGTSDQKNKRFSWEK. Residues 350–624 form the Protein kinase domain; sequence KASAETLGRG…VKDARAEAAL (275 aa). Ser-352 is subject to Phosphoserine. Residues 356-364 and Lys-378 each bind ATP; that span reads LGRGTLGST. Residues Ser-430 and Ser-433 each carry the phosphoserine modification. Position 509 is a phosphothreonine (Thr-509). The segment at 630–652 is disordered; it reads SDHSPGRWSDTIQSLPREDHMSI.

This sequence belongs to the protein kinase superfamily. Ser/Thr protein kinase family.

It is found in the cell membrane. The polypeptide is Inactive leucine-rich repeat receptor-like serine/threonine-protein kinase At1g60630 (Arabidopsis thaliana (Mouse-ear cress)).